We begin with the raw amino-acid sequence, 341 residues long: S-adenosylmethionine:tRNA ribosyltransferase-isomerase (341 aa).

The protein belongs to the QueA family. As to quaternary structure, monomer.

It localises to the cytoplasm. It catalyses the reaction 7-aminomethyl-7-carbaguanosine(34) in tRNA + S-adenosyl-L-methionine = epoxyqueuosine(34) in tRNA + adenine + L-methionine + 2 H(+). It functions in the pathway tRNA modification; tRNA-queuosine biosynthesis. In terms of biological role, transfers and isomerizes the ribose moiety from AdoMet to the 7-aminomethyl group of 7-deazaguanine (preQ1-tRNA) to give epoxyqueuosine (oQ-tRNA). The chain is S-adenosylmethionine:tRNA ribosyltransferase-isomerase from Trichlorobacter lovleyi (strain ATCC BAA-1151 / DSM 17278 / SZ) (Geobacter lovleyi).